We begin with the raw amino-acid sequence, 171 residues long: Large ribosomal subunit protein uL24 (171 aa).

The large ribosomal subunit protein uL24 stretch occupies residues 1-124 (MNIKTGDTVV…AKPAKTKAEK (124 aa)). The disordered stretch occupies residues 108-171 (GQTLDKAAKP…SVQKKGASGK (64 aa)). Positions 125–171 (VEKAATSSTDKPAKVTKAAKEAKPVKAVKSQKVEKNTSVQKKGASGK) are unknown.

Belongs to the universal ribosomal protein uL24 family. Part of the 50S ribosomal subunit.

In terms of biological role, one of two assembly initiator proteins, it binds directly to the 5'-end of the 23S rRNA, where it nucleates assembly of the 50S subunit. Functionally, one of the proteins that surrounds the polypeptide exit tunnel on the outside of the subunit. This Acholeplasma laidlawii (strain PG-8A) protein is Large ribosomal subunit protein uL24.